The following is a 535-amino-acid chain: Pentatricopeptide repeat-containing protein At5g16420, mitochondrial (535 aa).

The transit peptide at 1–28 (MFLSRVNPTRFPPFVASRRLFSASASAA) directs the protein to the mitochondrion. 12 PPR repeats span residues 82–112 (NYDT…LRNS), 119–153 (GENL…GVKR), 154–189 (SVRS…GITP), 190–224 (NIFT…GLVP), 225–259 (NLVT…GWYP), 260–294 (DATT…EIEP), 295–329 (NEVT…SFMP), 330–364 (DSSL…NCMP), 365–395 (DNAL…FEKG), 399–433 (SLLT…KCKP), 434–468 (NAFT…GCFP), and 469–503 (NKTT…GKVD).

The protein belongs to the PPR family. P subfamily.

It is found in the mitochondrion. This chain is Pentatricopeptide repeat-containing protein At5g16420, mitochondrial, found in Arabidopsis thaliana (Mouse-ear cress).